Reading from the N-terminus, the 79-residue chain is Metallothionein-like protein type 2 (79 aa).

It belongs to the metallothionein superfamily. Type 15 family.

Functionally, metallothioneins have a high content of cysteine residues that bind various heavy metals. The polypeptide is Metallothionein-like protein type 2 (MT1) (Malus domestica (Apple)).